The following is a 214-amino-acid chain: Adenylate kinase (214 aa).

Position 10–15 (10–15 (GAGKGT)) interacts with ATP. The NMP stretch occupies residues 30-59 (STGDMLRAAVKAGTPLGLEAKKVMDAGQLV). AMP is bound by residues Thr-31, Arg-36, 57-59 (QLV), 85-88 (GFPR), and Gln-92. Residues 122-159 (GRRVHSGSGRVYHVVFNPPKVEGKDDVTGEDLSIRPDD) are LID. ATP-binding positions include Arg-123 and 132-133 (VY). Residues Arg-156 and Arg-167 each contribute to the AMP site. Residue Gln-200 participates in ATP binding.

It belongs to the adenylate kinase family. Monomer.

It is found in the cytoplasm. The catalysed reaction is AMP + ATP = 2 ADP. It functions in the pathway purine metabolism; AMP biosynthesis via salvage pathway; AMP from ADP: step 1/1. In terms of biological role, catalyzes the reversible transfer of the terminal phosphate group between ATP and AMP. Plays an important role in cellular energy homeostasis and in adenine nucleotide metabolism. In Shewanella denitrificans (strain OS217 / ATCC BAA-1090 / DSM 15013), this protein is Adenylate kinase.